The following is a 108-amino-acid chain: uncharacterized protein (108 aa).

An N-terminal signal peptide occupies residues 1–22 (MMIKQCVICLSLLVFGTTAAHA).

This is an uncharacterized protein from Bacillus subtilis (strain 168).